Here is a 1484-residue protein sequence, read N- to C-terminus: Chromosome partition protein MukB (1484 aa).

Residue G34–S41 coordinates ATP. Coiled coils occupy residues L326 to Q418, L444 to H472, and R509 to P602. The interval P666–R783 is flexible hinge. Coiled-coil stretches lie at residues E835–E923, E977–G1116, and V1209–V1265. The tract at residues A1049–R1074 is disordered. Residues S1051–H1065 are compositionally biased toward basic and acidic residues.

Belongs to the SMC family. MukB subfamily. Homodimerization via its hinge domain. Binds to DNA via its C-terminal region. Interacts, and probably forms a ternary complex, with MukE and MukF via its C-terminal region. The complex formation is stimulated by calcium or magnesium. Interacts with tubulin-related protein FtsZ.

Its subcellular location is the cytoplasm. The protein resides in the nucleoid. Functionally, plays a central role in chromosome condensation, segregation and cell cycle progression. Functions as a homodimer, which is essential for chromosome partition. Involved in negative DNA supercoiling in vivo, and by this means organize and compact chromosomes. May achieve or facilitate chromosome segregation by condensation DNA from both sides of a centrally located replisome during cell division. The protein is Chromosome partition protein MukB of Salmonella dublin (strain CT_02021853).